Here is a 494-residue protein sequence, read N- to C-terminus: GTPase Der (494 aa).

EngA-type G domains lie at 2-164 (KKIA…PEED) and 235-407 (IKIS…KNYS). Residues 8-15 (GRPNVGKS), 55-59 (DTGGL), 116-119 (NKID), 241-248 (GRTNVGKS), 288-292 (DTAGL), and 352-355 (NKWD) contribute to the GTP site. One can recognise a KH-like domain in the interval 408–492 (QHIKTSELNV…PVLFKAKKRG (85 aa)).

This sequence belongs to the TRAFAC class TrmE-Era-EngA-EngB-Septin-like GTPase superfamily. EngA (Der) GTPase family. As to quaternary structure, associates with the 50S ribosomal subunit.

In terms of biological role, GTPase that plays an essential role in the late steps of ribosome biogenesis. This Sulfurimonas denitrificans (strain ATCC 33889 / DSM 1251) (Thiomicrospira denitrificans (strain ATCC 33889 / DSM 1251)) protein is GTPase Der.